We begin with the raw amino-acid sequence, 57 residues long: Large ribosomal subunit protein bL32 (57 aa).

The span at Met-1–Gln-19 shows a compositional bias: basic residues. A disordered region spans residues Met-1–Trp-20.

The protein belongs to the bacterial ribosomal protein bL32 family.

The sequence is that of Large ribosomal subunit protein bL32 from Mycobacterium avium (strain 104).